The sequence spans 431 residues: Trigger factor (431 aa).

Positions 164–249 constitute a PPIase FKBP-type domain; that stretch reads GDIAVIDFKG…IKEIKRKELP (86 aa).

This sequence belongs to the FKBP-type PPIase family. Tig subfamily.

The protein resides in the cytoplasm. It catalyses the reaction [protein]-peptidylproline (omega=180) = [protein]-peptidylproline (omega=0). Involved in protein export. Acts as a chaperone by maintaining the newly synthesized protein in an open conformation. Functions as a peptidyl-prolyl cis-trans isomerase. The protein is Trigger factor of Clostridium acetobutylicum (strain ATCC 824 / DSM 792 / JCM 1419 / IAM 19013 / LMG 5710 / NBRC 13948 / NRRL B-527 / VKM B-1787 / 2291 / W).